A 404-amino-acid polypeptide reads, in one-letter code: WD repeat and SOCS box-containing protein 2 (404 aa).

WD repeat units lie at residues 16 to 55 (GRPH…LIPW), 81 to 140 (GSPK…IWEV), 144 to 183 (LLLL…IWDL), 188 to 226 (KQIQ…LWSM), 230 to 268 (TLIR…MWDP), 283 to 322 (DPAM…IWAL), and 325 to 362 (KTPI…FWTA). The interval 68 to 87 (AKSRSSKNETKGRGSPKEKT) is disordered. The region spanning 356 to 404 (HVQFWTAPRVLSSLKHLCRKALRSFLTTYQVLALPIPKKMKEFLTYRTF) is the SOCS box domain.

Its pathway is protein modification; protein ubiquitination. In terms of biological role, may be a substrate-recognition component of a SCF-like ECS (Elongin-Cullin-SOCS-box protein) E3 ubiquitin ligase complex which mediates the ubiquitination and subsequent proteasomal degradation of target proteins. This chain is WD repeat and SOCS box-containing protein 2 (WSB2), found in Homo sapiens (Human).